The following is a 275-amino-acid chain: Large ribosomal subunit protein uL2 (275 aa).

The segment at 223-275 is disordered; it reads VAMNPIDHPHGGGEGRTGEAREPVSPWGTPSKGYKTRRNKRTNNMIVQRRKRK. A compositionally biased stretch (basic and acidic residues) spans 229–244; that stretch reads DHPHGGGEGRTGEARE.

The protein belongs to the universal ribosomal protein uL2 family. As to quaternary structure, part of the 50S ribosomal subunit. Forms a bridge to the 30S subunit in the 70S ribosome.

One of the primary rRNA binding proteins. Required for association of the 30S and 50S subunits to form the 70S ribosome, for tRNA binding and peptide bond formation. It has been suggested to have peptidyltransferase activity; this is somewhat controversial. Makes several contacts with the 16S rRNA in the 70S ribosome. This chain is Large ribosomal subunit protein uL2, found in Bordetella avium (strain 197N).